Reading from the N-terminus, the 410-residue chain is Putative transposase Rv3428c (410 aa).

An Integrase catalytic domain is found at 40–220 (VPRGPVDAGS…QPLRMFEAVE (181 aa)). Residues 390–410 (AANEPTTSSPASTAGGVPARP) form a disordered region.

The protein belongs to the transposase IS21/IS408/IS1162 family.

In Mycobacterium tuberculosis (strain ATCC 25618 / H37Rv), this protein is Putative transposase Rv3428c.